The chain runs to 91 residues: Small ribosomal subunit protein uS19c (91 aa).

This sequence belongs to the universal ribosomal protein uS19 family.

The protein localises to the plastid. The protein resides in the organellar chromatophore. Protein S19 forms a complex with S13 that binds strongly to the 16S ribosomal RNA. This is Small ribosomal subunit protein uS19c from Paulinella chromatophora.